Consider the following 593-residue polypeptide: Probable tripeptidyl-peptidase SED3 (593 aa).

An N-terminal signal peptide occupies residues 1–18; sequence MLLRWHSVIPLFLTMTVA. Residues 19–198 constitute a propeptide, removed in mature form; sequence LPNTYRTVVE…SLQVIYSSTN (180 aa). Residues asparagine 198, asparagine 204, asparagine 261, and asparagine 275 are each glycosylated (N-linked (GlcNAc...) asparagine). Positions 206–592 constitute a Peptidase S53 domain; it reads TITPRCLREL…RILAKIVQHM (387 aa). Residues glutamate 282 and aspartate 286 each act as charge relay system in the active site. An N-linked (GlcNAc...) asparagine glycan is attached at asparagine 295. The active-site Charge relay system is the serine 496. 2 residues coordinate Ca(2+): aspartate 538 and isoleucine 539. 2 N-linked (GlcNAc...) asparagine glycosylation sites follow: asparagine 554 and asparagine 566. Residues glycine 570 and aspartate 572 each coordinate Ca(2+).

Ca(2+) is required as a cofactor.

Its subcellular location is the secreted. It localises to the extracellular space. The catalysed reaction is Release of an N-terminal tripeptide from a polypeptide.. Functionally, secreted tripeptidyl-peptidase which degrades proteins at acidic pHs and is involved in virulence. This chain is Probable tripeptidyl-peptidase SED3 (SED3), found in Trichophyton verrucosum (strain HKI 0517).